Here is a 53-residue protein sequence, read N- to C-terminus: Light-harvesting protein B-800/820 alpha chain (53 aa).

Residues 1 to 14 (MNQGKIWTVVNPAV) lie on the Cytoplasmic side of the membrane. Residues 15 to 35 (GLPLLLGSVAITALLVHLAVL) traverse the membrane as a helical segment. A bacteriochlorophyll is bound at residue H31. Topologically, residues 36–53 (THTTWFPAFTQGGLKKAA) are periplasmic.

This sequence belongs to the antenna complex alpha subunit family. The core complex is formed by different alpha and beta chains, binding bacteriochlorophyll molecules, and arranged most probably in tetrameric structures disposed around the reaction center. The non-pigmented gamma chains may constitute additional components.

It localises to the cell inner membrane. Its function is as follows. Antenna complexes are light-harvesting systems, which transfer the excitation energy to the reaction centers. The polypeptide is Light-harvesting protein B-800/820 alpha chain (Rhodoblastus acidophilus (Rhodopseudomonas acidophila)).